Here is a 200-residue protein sequence, read N- to C-terminus: Dephospho-CoA kinase (200 aa).

The DPCK domain maps to 3 to 200; sequence VIGLTGGIGS…KKYMTLAQGS (198 aa). 11–16 contributes to the ATP binding site; the sequence is GSGKTS.

It belongs to the CoaE family.

The protein localises to the cytoplasm. The catalysed reaction is 3'-dephospho-CoA + ATP = ADP + CoA + H(+). Its pathway is cofactor biosynthesis; coenzyme A biosynthesis; CoA from (R)-pantothenate: step 5/5. Its function is as follows. Catalyzes the phosphorylation of the 3'-hydroxyl group of dephosphocoenzyme A to form coenzyme A. The protein is Dephospho-CoA kinase of Nitrosospira multiformis (strain ATCC 25196 / NCIMB 11849 / C 71).